We begin with the raw amino-acid sequence, 317 residues long: Aquaporin-2 (317 aa).

Residues 1–75 are Cytoplasmic-facing; it reads MSLRDDLTIN…RSQEFKMQHR (75 aa). A helical transmembrane segment spans residues 76 to 96; it reads EFLAEFIGTLILVLLTCGFCA. Residues 97–108 are Extracellular-facing; it reads EQTLNIEKSKSW. A helical transmembrane segment spans residues 109–129; it reads LTSSLGSGLSVLIGICVAGHV. Over 130-154 the chain is Cytoplasmic; it reads SGGHLNPAITIAFWVFSGFPIRKVP. An NPA 1 motif is present at residues 135-137; the sequence is NPA. A helical membrane pass occupies residues 155-175; it reads MYITAQLLGAFSGAALLYSIV. The Extracellular portion of the chain corresponds to 176 to 208; that stretch reads EPAISQFDHGKRQILGELGTAGIFGTYPPLYVG. A helical transmembrane segment spans residues 209–229; that stretch reads TGSAVASEVVGTAMLLLVVMV. The Cytoplasmic portion of the chain corresponds to 230–242; that stretch reads TGHPNNLPFRTAQ. Residues 243–263 traverse the membrane as a helical segment; the sequence is GAMIALGVTTISLCIGYTSGF. Over 264 to 295 the chain is Extracellular; the sequence is SLNPARDFGPRLFTAVAGWGIDVFTVHHYYAL. The short motif at 266 to 268 is the NPA 2 element; the sequence is NPA. Residues 296–316 traverse the membrane as a helical segment; it reads VPMFAPILGGLAGGFIYTVFI. A topological domain (cytoplasmic) is located at residue Asp317.

The protein belongs to the MIP/aquaporin (TC 1.A.8) family.

It is found in the cell membrane. It catalyses the reaction H2O(in) = H2O(out). The catalysed reaction is glycerol(in) = glycerol(out). In terms of biological role, water channel required to facilitate the transport of water across membranes. Contributes to water uptake of spores during the early stages of spore germination. Aquaporins AQP1 and AQP2 act as extracellular pH sensors and enable the spores to hydrate under favorable conditions and to commence germination. Wounded vegetables and fruit present acidic pH, so the optimal pH range for germination is adapted to the relevant host pH. This Rhizopus delemar (strain RA 99-880 / ATCC MYA-4621 / FGSC 9543 / NRRL 43880) (Mucormycosis agent) protein is Aquaporin-2.